We begin with the raw amino-acid sequence, 182 residues long: UPF0397 protein VV2_1534 (182 aa).

A run of 5 helical transmembrane segments spans residues 8–28 (VVVIAIGAALYGIGGLPMFGI), 41–61 (AVLALFSVLFGPLVGFLVGFI), 72–92 (WGVWLTWVLGSGIVGLIIGLF), 110–130 (FSLFVVLALLGNVFGYGCSAF), and 146–166 (QLTIIASGNTVLIAIVGYFIL).

It belongs to the UPF0397 family.

It localises to the cell membrane. This is UPF0397 protein VV2_1534 from Vibrio vulnificus (strain CMCP6).